The sequence spans 222 residues: 7-cyano-7-deazaguanine synthase (222 aa).

Residue 14-24 participates in ATP binding; that stretch reads FSGGQDSTTCL. Cysteine 190, cysteine 199, cysteine 202, and cysteine 205 together coordinate Zn(2+).

The protein belongs to the QueC family. In terms of assembly, homodimer. It depends on Zn(2+) as a cofactor.

It carries out the reaction 7-carboxy-7-deazaguanine + NH4(+) + ATP = 7-cyano-7-deazaguanine + ADP + phosphate + H2O + H(+). The protein operates within purine metabolism; 7-cyano-7-deazaguanine biosynthesis. Catalyzes the ATP-dependent conversion of 7-carboxy-7-deazaguanine (CDG) to 7-cyano-7-deazaguanine (preQ(0)). The polypeptide is 7-cyano-7-deazaguanine synthase (Staphylococcus aureus (strain bovine RF122 / ET3-1)).